The following is a 288-amino-acid chain: Eukaryotic translation initiation factor 3 subunit F-2 (288 aa).

In terms of domain architecture, MPN spans 12-149 (VLLHPLVLFQ…TRIFCAVATG (138 aa)).

Belongs to the eIF-3 subunit F family. In terms of assembly, component of the eukaryotic translation initiation factor 3 (eIF-3) complex. The eIF-3 complex interacts with pix.

It localises to the cytoplasm. In terms of biological role, component of the eukaryotic translation initiation factor 3 (eIF-3) complex, which is involved in protein synthesis of a specialized repertoire of mRNAs and, together with other initiation factors, stimulates binding of mRNA and methionyl-tRNAi to the 40S ribosome. The eIF-3 complex specifically targets and initiates translation of a subset of mRNAs involved in cell proliferation. This is Eukaryotic translation initiation factor 3 subunit F-2 from Drosophila persimilis (Fruit fly).